Reading from the N-terminus, the 327-residue chain is N-acetylmuramoyl-L-alanine amidase sle1 (327 aa).

The N-terminal stretch at 1–25 (MRKKIIATVIGTSALAAVTWTNADA) is a signal peptide. LysM domains lie at 27–70 (TTYK…SLKV), 86–129 (STYT…KLKV), and 150–193 (TTYT…KLKV). The interval 68–89 (LKVSGSTSSSTSSNTSTGSTYT) is disordered. Over residues 71–87 (SGSTSSSTSSNTSTGST) the composition is skewed to low complexity. Residues 203 to 327 (GSSSTGSAGY…SQVSSYVYIH (125 aa)) form the Peptidase C51 domain.

The protein localises to the secreted. The protein resides in the cell surface. The enzyme catalyses Hydrolyzes the link between N-acetylmuramoyl residues and L-amino acid residues in certain cell-wall glycopeptides.. Peptidoglycan hydrolase involved in the splitting of the septum during cell division. This chain is N-acetylmuramoyl-L-alanine amidase sle1 (sle1), found in Staphylococcus saprophyticus subsp. saprophyticus (strain ATCC 15305 / DSM 20229 / NCIMB 8711 / NCTC 7292 / S-41).